The primary structure comprises 1128 residues: Nck-associated protein 1 (1128 aa).

At Ser-2 the chain carries N-acetylserine. The interval 640 to 665 is disordered; it reads AVNKKSKKQTGKKGEPEREKPGVESM. Positions 651-665 are enriched in basic and acidic residues; the sequence is KKGEPEREKPGVESM. Residues 995–1015 form a helical membrane-spanning segment; that stretch reads IACLLMVFVAVSLPTLASNVM.

Belongs to the HEM-1/HEM-2 family. In terms of assembly, component of the WAVE1 complex composed of ABI2, CYFIP1 or CYFIP2, BRK1, NCKAP1 and WASF1/WAVE1. Within the complex, a heterodimer containing NCKAP1 and CYFIP1 interacts with a heterotrimer formed by WAVE1, ABI2 and BRK1. Component of the WAVE2 complex composed of ABI1, CYFIP1/SRA1, NCKAP1/NAP1 and WASF2/WAVE2. CYFIP2 binds to activated RAC1 which causes the complex to dissociate, releasing activated WASF1. The complex can also be activated by NCK1. Associates preferentially with the first SH3 domain of NCK. Interacts with NYAP1, NYAP2 and MYO16. Interacts with TMEM132D. As to expression, preferentially expressed in brain, heart, liver and testis.

The protein resides in the cell membrane. It localises to the cell projection. It is found in the lamellipodium membrane. In terms of biological role, part of the WAVE complex that regulates lamellipodia formation. The WAVE complex regulates actin filament reorganization via its interaction with the Arp2/3 complex. Actin remodeling activity is regulated by RAC1. As component of the WAVE1 complex, required for BDNF-NTRK2 endocytic trafficking and signaling from early endosomes. The sequence is that of Nck-associated protein 1 (Nckap1) from Rattus norvegicus (Rat).